An 820-amino-acid chain; its full sequence is Quinate repressor protein (820 aa).

The disordered stretch occupies residues 25 to 79 (SFEQMLLQQDSNESSRRTSPSRTHSRVDLERHSSHIVSLSSSNGSPSLEDPENRL). Residues 59–71 (HIVSLSSSNGSPS) show a composition bias toward low complexity.

The protein in the N-terminal section; belongs to the shikimate kinase family. In the 2nd section; belongs to the type-I 3-dehydroquinase family. It in the C-terminal section; belongs to the shikimate dehydrogenase family. In terms of assembly, interacts with qutA; transcriptional activator of the quinate utilization pathway genes.

Its function is as follows. Multi-domain repressor protein that negatively regulates transcription of the quinate utilization pathway genes. May mediate its repressor activity by binding directly to the qutA activator protein. The protein is Quinate repressor protein (qutR) of Talaromyces stipitatus (strain ATCC 10500 / CBS 375.48 / QM 6759 / NRRL 1006) (Penicillium stipitatum).